Here is a 202-residue protein sequence, read N- to C-terminus: Outer-membrane lipoprotein carrier protein (202 aa).

The signal sequence occupies residues M1–A21.

It belongs to the LolA family. Monomer.

Its subcellular location is the periplasm. Its function is as follows. Participates in the translocation of lipoproteins from the inner membrane to the outer membrane. Only forms a complex with a lipoprotein if the residue after the N-terminal Cys is not an aspartate (The Asp acts as a targeting signal to indicate that the lipoprotein should stay in the inner membrane). The chain is Outer-membrane lipoprotein carrier protein from Yersinia pestis bv. Antiqua (strain Antiqua).